The sequence spans 275 residues: Transmembrane protein 202 (275 aa).

4 consecutive transmembrane segments (helical) span residues 60–80, 116–136, 151–171, and 193–213; these read SGFS…QFLV, ALFL…LSSC, VSML…LFLA, and WCSE…FITF.

It localises to the membrane. The chain is Transmembrane protein 202 (Tmem202) from Mus musculus (Mouse).